Consider the following 210-residue polypeptide: Molybdenum cofactor guanylyltransferase (210 aa).

GTP is bound by residues 14–16 (LAG), Lys-27, Asn-55, Asp-73, and Asp-108. Residue Asp-108 participates in Mg(2+) binding.

The protein belongs to the MobA family. As to quaternary structure, monomer. Mg(2+) serves as cofactor.

Its subcellular location is the cytoplasm. The catalysed reaction is Mo-molybdopterin + GTP + H(+) = Mo-molybdopterin guanine dinucleotide + diphosphate. In terms of biological role, transfers a GMP moiety from GTP to Mo-molybdopterin (Mo-MPT) cofactor (Moco or molybdenum cofactor) to form Mo-molybdopterin guanine dinucleotide (Mo-MGD) cofactor. The chain is Molybdenum cofactor guanylyltransferase from Rhodopseudomonas palustris (strain BisB5).